Reading from the N-terminus, the 442-residue chain is Probable carboxypeptidase PABG_01461 (442 aa).

A signal peptide spans 1-20 (MKLQYLVALLSVQAVPPVTA). N102 carries an N-linked (GlcNAc...) asparagine glycan. D160 contacts Zn(2+). E192 (proton acceptor) is an active-site residue. E193 contacts Zn(2+). Residue N343 is glycosylated (N-linked (GlcNAc...) asparagine).

Belongs to the peptidase M20A family. Zn(2+) is required as a cofactor.

The protein resides in the secreted. In Paracoccidioides brasiliensis (strain Pb03), this protein is Probable carboxypeptidase PABG_01461.